The sequence spans 118 residues: MSREITARPNKNVPIVVGVCVVAFFVLLAFMQQKHKTHSGGDYGVPTFSNGGKYRDGTRSADFNSNNHRAYGCGGSGGSVSSRVGQQLVVLAIVSVLIVSLLQRLRSPPEHICNGACG.

Residues 1 to 11 lie on the Cytoplasmic side of the membrane; sequence MSREITARPNK. The helical transmembrane segment at 12-32 threads the bilayer; it reads NVPIVVGVCVVAFFVLLAFMQ. The Lumenal segment spans residues 33–81; sequence QKHKTHSGGDYGVPTFSNGGKYRDGTRSADFNSNNHRAYGCGGSGGSVS. Residues 82 to 102 traverse the membrane as a helical segment; it reads SRVGQQLVVLAIVSVLIVSLL. Topologically, residues 103–118 are cytoplasmic; sequence QRLRSPPEHICNGACG.

This sequence belongs to the virgaviridae/benyvirus TGB2 movement protein family. As to quaternary structure, interacts with movement protein TGB3.

Its subcellular location is the host cell junction. It localises to the host plasmodesma. The protein resides in the host endoplasmic reticulum membrane. Its function is as follows. Participates in the transport of viral RNA to the plasmodesmata. Is probably targeted to plasmodesmata by TGBp3, along with viral RNAs-TGBp1 (RNP complex). Can gate plasmodesmata and increase their size exclusion limit. This Beet necrotic yellow vein virus (isolate Japan/S) (BNYVV) protein is Movement protein TGB2.